A 262-amino-acid chain; its full sequence is Type III pantothenate kinase (262 aa).

An ATP-binding site is contributed by 6-13; sequence DVGNTNAV. Residues Tyr-100 and 107 to 110 contribute to the substrate site; that span reads GADR. Asp-109 acts as the Proton acceptor in catalysis. Asp-129 provides a ligand contact to K(+). Thr-132 provides a ligand contact to ATP. A substrate-binding site is contributed by Thr-184.

It belongs to the type III pantothenate kinase family. As to quaternary structure, homodimer. NH4(+) is required as a cofactor. The cofactor is K(+).

The protein localises to the cytoplasm. It carries out the reaction (R)-pantothenate + ATP = (R)-4'-phosphopantothenate + ADP + H(+). It functions in the pathway cofactor biosynthesis; coenzyme A biosynthesis; CoA from (R)-pantothenate: step 1/5. Its function is as follows. Catalyzes the phosphorylation of pantothenate (Pan), the first step in CoA biosynthesis. The protein is Type III pantothenate kinase of Bacillus cereus (strain G9842).